A 329-amino-acid chain; its full sequence is Probable acyltransferase FabY (329 aa).

The 145-residue stretch at 18 to 162 folds into the N-acetyltransferase domain; that stretch reads YHLRVPQTEE…RHFLMIKPVA (145 aa).

It belongs to the acetyltransferase family. FabY subfamily.

Its pathway is lipid metabolism; fatty acid biosynthesis. In terms of biological role, supports initiation of fatty acid biosynthesis in the absence of FabH. This is Probable acyltransferase FabY from Escherichia coli O157:H7.